A 128-amino-acid chain; its full sequence is UPF0102 protein MAV_3752 (128 aa).

It belongs to the UPF0102 family.

The chain is UPF0102 protein MAV_3752 from Mycobacterium avium (strain 104).